The chain runs to 496 residues: Beta-amylase (496 aa).

Substrate-binding residues include D54, H94, and D102. E187 (proton donor) is an active-site residue. Substrate contacts are provided by K296, H301, and T343. The Proton acceptor role is filled by E381. Substrate-binding positions include 382–383 and R421; that span reads NA.

Belongs to the glycosyl hydrolase 14 family.

The enzyme catalyses Hydrolysis of (1-&gt;4)-alpha-D-glucosidic linkages in polysaccharides so as to remove successive maltose units from the non-reducing ends of the chains.. This Trifolium repens (Creeping white clover) protein is Beta-amylase (BMY1).